The following is an 894-amino-acid chain: Sorting nexin-14 (894 aa).

The PXA domain occupies 78 to 252 (SSKVDASLSE…LLIIFIDDSP (175 aa)). The 133-residue stretch at 284-416 (ELKQIREQQD…CHSDEYFRQL (133 aa)) folds into the RGS domain. The residue at position 496 (Ser-496) is a Phosphoserine. In terms of domain architecture, PX spans 518–638 (PYVDFFEDPS…DFLSPNGGET (121 aa)).

The protein belongs to the sorting nexin family.

It is found in the cytoplasm. It localises to the cell projection. Its subcellular location is the dendrite. Plays a role in maintaining normal neuronal excitability and synaptic transmission. May be involved in several stages of intracellular trafficking. This is Sorting nexin-14 (SNX14) from Pongo abelii (Sumatran orangutan).